The chain runs to 518 residues: Histone deacetylase 1 (518 aa).

The tract at residues 22 to 333 (RRVCYFYDAE…WCYETGVALG (312 aa)) is histone deacetylase. His153 serves as the catalytic Proton donor/acceptor. The Zn(2+) site is built by Asp188, His190, and Asp276. Residues 387–518 (HAPSVQFQER…QDQPSVHQKT (132 aa)) form a disordered region. Acidic residues predominate over residues 401 to 412 (ELPEQDEDQEDP). Positions 413-435 (DERHHADSDVEMDDVKPLDDSGR) are enriched in basic and acidic residues. Residues 503 to 518 (DNSNKLQDQPSVHQKT) show a composition bias toward polar residues.

Belongs to the histone deacetylase family. HD Type 1 subfamily. Interacts with TPR3. It depends on Zn(2+) as a cofactor. In terms of tissue distribution, expressed in roots and leaves.

It is found in the nucleus. It carries out the reaction N(6)-acetyl-L-lysyl-[histone] + H2O = L-lysyl-[histone] + acetate. Its function is as follows. Responsible for the deacetylation of lysine residues on the N-terminal part of the core histones (H2A, H2B, H3 and H4). Histone deacetylation gives a tag for epigenetic repression and plays an important role in transcriptional regulation, cell cycle progression and developmental events. Histone deacetylases act via the formation of large multiprotein complexes. Negatively regulates the expression of the NAC48/NAC6 gene that controls root growth in seedlings. Epigenetically represses the expression of NAC48/NAC6 by deacetylating 'Lys-9' (H3K9ac), 'Lys-14' (H3K14ac) and 'Lys-18' (H3K18ac) of histone H3, and 'Lys-5' (H4K5ac), 'Lys-12' (H4K12ac) and 'Lys-16' (H4K16ac) of histone H4. Functions in the regulation of gene expression in the whole genome. Acts as a chromatin remodeling regulator to promote the formation of a repressive chromatin state. Functions with MODD via its interaction with TPR3, to down-regulates the histone acetylation level at BZIP46 target genes. BZIP46 is a positive regulator of abscisic acid (ABA) signaling and drought stress tolerance. The chain is Histone deacetylase 1 from Oryza sativa subsp. japonica (Rice).